Here is a 288-residue protein sequence, read N- to C-terminus: Elongation factor Ts (288 aa).

The segment at 82–85 (TDFV) is involved in Mg(2+) ion dislocation from EF-Tu.

The protein belongs to the EF-Ts family.

The protein resides in the cytoplasm. In terms of biological role, associates with the EF-Tu.GDP complex and induces the exchange of GDP to GTP. It remains bound to the aminoacyl-tRNA.EF-Tu.GTP complex up to the GTP hydrolysis stage on the ribosome. This Chlorobium luteolum (strain DSM 273 / BCRC 81028 / 2530) (Pelodictyon luteolum) protein is Elongation factor Ts.